The chain runs to 39 residues: Photosystem II reaction center protein L (39 aa).

Residues 16–37 (RTSLYLGLLLVAVLGILFSSYF) form a helical membrane-spanning segment.

This sequence belongs to the PsbL family. PSII is composed of 1 copy each of membrane proteins PsbA, PsbB, PsbC, PsbD, PsbE, PsbF, PsbH, PsbI, PsbJ, PsbK, PsbL, PsbM, PsbT, PsbX, PsbY, PsbZ, Psb30/Ycf12, peripheral proteins PsbO, CyanoQ (PsbQ), PsbU, PsbV and a large number of cofactors. It forms dimeric complexes.

Its subcellular location is the cellular thylakoid membrane. In terms of biological role, one of the components of the core complex of photosystem II (PSII). PSII is a light-driven water:plastoquinone oxidoreductase that uses light energy to abstract electrons from H(2)O, generating O(2) and a proton gradient subsequently used for ATP formation. It consists of a core antenna complex that captures photons, and an electron transfer chain that converts photonic excitation into a charge separation. This subunit is found at the monomer-monomer interface and is required for correct PSII assembly and/or dimerization. Required for PSII activity, at least in part due to its effects on PSII assembly. May make specific contact(s) with lipids. This is Photosystem II reaction center protein L from Synechocystis sp. (strain ATCC 27184 / PCC 6803 / Kazusa).